Here is a 485-residue protein sequence, read N- to C-terminus: Aspartyl/glutamyl-tRNA(Asn/Gln) amidotransferase subunit B (485 aa).

This sequence belongs to the GatB/GatE family. GatB subfamily. As to quaternary structure, heterotrimer of A, B and C subunits.

It catalyses the reaction L-glutamyl-tRNA(Gln) + L-glutamine + ATP + H2O = L-glutaminyl-tRNA(Gln) + L-glutamate + ADP + phosphate + H(+). The enzyme catalyses L-aspartyl-tRNA(Asn) + L-glutamine + ATP + H2O = L-asparaginyl-tRNA(Asn) + L-glutamate + ADP + phosphate + 2 H(+). Functionally, allows the formation of correctly charged Asn-tRNA(Asn) or Gln-tRNA(Gln) through the transamidation of misacylated Asp-tRNA(Asn) or Glu-tRNA(Gln) in organisms which lack either or both of asparaginyl-tRNA or glutaminyl-tRNA synthetases. The reaction takes place in the presence of glutamine and ATP through an activated phospho-Asp-tRNA(Asn) or phospho-Glu-tRNA(Gln). This chain is Aspartyl/glutamyl-tRNA(Asn/Gln) amidotransferase subunit B, found in Cupriavidus taiwanensis (strain DSM 17343 / BCRC 17206 / CCUG 44338 / CIP 107171 / LMG 19424 / R1) (Ralstonia taiwanensis (strain LMG 19424)).